The sequence spans 98 residues: Alpha-elicitin DRE-alpha (98 aa).

3 cysteine pairs are disulfide-bonded: C3–C71, C27–C56, and C51–C95.

Belongs to the elicitin family.

It localises to the secreted. In terms of biological role, induces local and distal defense responses (incompatible hypersensitive reaction) in plants from the solanaceae and cruciferae families. Elicits leaf necrosis and causes the accumulation of pathogenesis-related proteins. Might interact with the lipidic molecules of the plasma membrane. The chain is Alpha-elicitin DRE-alpha from Phytophthora drechsleri.